Consider the following 227-residue polypeptide: 2,3-bisphosphoglycerate-dependent phosphoglycerate mutase (227 aa).

Substrate is bound by residues 7-14 (RHGLSEWN), 20-21 (TG), Arg-59, 86-89 (ERHY), Lys-97, 113-114 (RR), and 182-183 (GN). Catalysis depends on His-8, which acts as the Tele-phosphohistidine intermediate. The Proton donor/acceptor role is filled by Glu-86.

It belongs to the phosphoglycerate mutase family. BPG-dependent PGAM subfamily. In terms of assembly, homodimer.

The enzyme catalyses (2R)-2-phosphoglycerate = (2R)-3-phosphoglycerate. Its pathway is carbohydrate degradation; glycolysis; pyruvate from D-glyceraldehyde 3-phosphate: step 3/5. Catalyzes the interconversion of 2-phosphoglycerate and 3-phosphoglycerate. In Actinobacillus succinogenes (strain ATCC 55618 / DSM 22257 / CCUG 43843 / 130Z), this protein is 2,3-bisphosphoglycerate-dependent phosphoglycerate mutase.